Reading from the N-terminus, the 229-residue chain is MELLLLSNSTLPGKAWLEHALPLIANQLNGRRSAVFIPFAGVTQTWDEYTDKTAEVLAPLGINVTGIHRVADPLAAIEKAEIVIVGGGNTFQLLKESRERGLLAPVADRVKRGALYIGWSAGANLACPTIRTTNDMPIVDPNGFDALDLFPLQINPHFTNALPEGHKGETREQHIRELLVVAPELTVIGLPEGNWIQVSNGQAVLGGPNTTWVFKAGEEAVALEAGHRF.

Active-site charge relay system residues include Ser120, Asp135, and His157.

Belongs to the peptidase S51 family.

The protein localises to the cytoplasm. It catalyses the reaction Dipeptidase E catalyzes the hydrolysis of dipeptides Asp-|-Xaa. It does not act on peptides with N-terminal Glu, Asn or Gln, nor does it cleave isoaspartyl peptides.. In terms of biological role, hydrolyzes dipeptides containing N-terminal aspartate residues. May play a role in allowing the cell to use peptide aspartate to spare carbon otherwise required for the synthesis of the aspartate family of amino acids. The chain is Peptidase E from Salmonella typhi.